A 295-amino-acid chain; its full sequence is ESX-3 secretion-associated protein EspG3 (295 aa).

It belongs to the EspG family. As to quaternary structure, interacts specifically with ESX-3-dependent PE/PPE proteins.

It is found in the cytoplasm. Functionally, specific chaperone for cognate PE/PPE proteins. Plays an important role in preventing aggregation of PE/PPE dimers. This is ESX-3 secretion-associated protein EspG3 from Mycobacterium tuberculosis (strain CDC 1551 / Oshkosh).